Reading from the N-terminus, the 491-residue chain is Nucleoporin NUP42 (491 aa).

The C3H1-type zinc-finger motif lies at 1-25 (MAICNFFLQGRCRYGEKCWNEHPRG). 2 disordered regions span residues 23–82 (PRGG…SQRY) and 92–111 (TTWI…SGFG). A compositionally biased stretch (polar residues) spans 33–64 (RYQSQNRYQEQSRYQEQSRYPEQSRYPEQNRY). FG repeat units follow at residues 110–111 (FG), 259–260 (FG), 302–303 (FG), 312–313 (FG), 333–334 (FG), 342–343 (FG), 363–364 (FG), 375–376 (FG), 379–380 (FG), and 410–411 (FG).

Probable component of the nuclear pore complex (NPC).

It localises to the nucleus. The protein localises to the nuclear pore complex. It is found in the nucleus membrane. In terms of biological role, required for the export of mRNAs containing poly(A) tails from the nucleus into the cytoplasm. The protein is Nucleoporin NUP42 (nup42) of Xenopus laevis (African clawed frog).